We begin with the raw amino-acid sequence, 121 residues long: Small ribosomal subunit protein uS13 (121 aa).

The tract at residues 92–121 (RRGLPVRGQNSKNNARTRKGPKRTVANKKK) is disordered. Basic residues predominate over residues 106-121 (ARTRKGPKRTVANKKK).

This sequence belongs to the universal ribosomal protein uS13 family. Part of the 30S ribosomal subunit. Forms a loose heterodimer with protein S19. Forms two bridges to the 50S subunit in the 70S ribosome.

In terms of biological role, located at the top of the head of the 30S subunit, it contacts several helices of the 16S rRNA. In the 70S ribosome it contacts the 23S rRNA (bridge B1a) and protein L5 of the 50S subunit (bridge B1b), connecting the 2 subunits; these bridges are implicated in subunit movement. Contacts the tRNAs in the A and P-sites. This Shouchella clausii (strain KSM-K16) (Alkalihalobacillus clausii) protein is Small ribosomal subunit protein uS13.